The chain runs to 760 residues: MRFLLVGFVALLAVSAFIPNVYAEDEIEDAPKETKEETREEDSIKLDGLSVSQIKELRSKAEKHEFQAEVNRMMKLIINSLYRNKEIFLRELISNASDALDKIRLLSLTDPEQLRETEEMSVKIKADRENRLLHITDTGVGMTRQDLINNLGTIARSGTSEFLSKLMDTATSSDQQQDLIGQFGVGFYAAFLVADRVVVTTKNNDDDQYIWESDSASFTISKDPRGNTLKRGTQITLYLKEEAADFLEPDTLKNLVHKYSQFINFDIFLWQSKTEMVEEAVEEEPATTEDGAVEEEKEEKKTKKVEKTTWDWEKVNNVKPIWMRKPNQVEEDEYKQFYKSITKDSEEPLSHVHFSAEGEVSFRSILYVPKKSPNDMFQNYGKVIENIKLYVRRVFITDDFADMLPKYLSFIRGIVDSDDLPLNVSRENLQQHKLLKVIKKKLVRKVLDMLKKLDGAQFDDFWSEFSTNIKLGVMEDPSNRMRLAKLLRFQSSNDADKTTTLAAYVERMKEKQDAIYYMAGTSRKEVETSPFVERLIAKGYEVLFLTEAVDEYCIQAMPEYESKKFQNVAKEGVTIDDGEKAKEAHKGLEEEFKPLTDWLKETALKDLIEKAVVSQRLVKSPSALVASSYGWSGNMERIMKSQAYAKAKDPTQDFYATQKKTFEINPRHPVIKELLKRVTASEEDTTAASTAKLLFETATLRSGFSLQDQVGFADRIEAVLRQSLDVSQDAQVETEQHIEEAEPEPEAAEETTIEEEHSEL.

Positions 1-23 are cleaved as a signal peptide; that stretch reads MRFLLVGFVALLAVSAFIPNVYA. Positions 95, 137, 150, and 187 each coordinate ATP. An N-linked (GlcNAc...) asparagine glycan is attached at Asn95. N-linked (GlcNAc...) asparagine glycosylation is present at Asn423. Residues 727–760 form a disordered region; it reads SQDAQVETEQHIEEAEPEPEAAEETTIEEEHSEL. Residues 741 to 760 are compositionally biased toward acidic residues; it reads AEPEPEAAEETTIEEEHSEL. The Prevents secretion from ER signature appears at 757–760; the sequence is HSEL.

Belongs to the heat shock protein 90 family.

The protein resides in the endoplasmic reticulum lumen. In terms of biological role, molecular chaperone that functions in the processing and transport of secreted proteins. This is Endoplasmin homolog from Caenorhabditis elegans.